The sequence spans 400 residues: Nicotinate phosphoribosyltransferase (400 aa).

At H220 the chain carries Phosphohistidine; by autocatalysis.

The protein belongs to the NAPRTase family. In terms of processing, transiently phosphorylated on a His residue during the reaction cycle. Phosphorylation strongly increases the affinity for substrates and increases the rate of nicotinate D-ribonucleotide production. Dephosphorylation regenerates the low-affinity form of the enzyme, leading to product release.

The enzyme catalyses nicotinate + 5-phospho-alpha-D-ribose 1-diphosphate + ATP + H2O = nicotinate beta-D-ribonucleotide + ADP + phosphate + diphosphate. Its pathway is cofactor biosynthesis; NAD(+) biosynthesis; nicotinate D-ribonucleotide from nicotinate: step 1/1. Its function is as follows. Catalyzes the synthesis of beta-nicotinate D-ribonucleotide from nicotinate and 5-phospho-D-ribose 1-phosphate at the expense of ATP. The polypeptide is Nicotinate phosphoribosyltransferase (Shigella boydii serotype 18 (strain CDC 3083-94 / BS512)).